A 224-amino-acid polypeptide reads, in one-letter code: tRNA (guanine-N(7)-)-methyltransferase (224 aa).

S-adenosyl-L-methionine-binding residues include Glu57, Asp82, and Asp109. Asp167 is a binding site for substrate.

The protein belongs to the class I-like SAM-binding methyltransferase superfamily. TrmB family.

The catalysed reaction is guanosine(46) in tRNA + S-adenosyl-L-methionine = N(7)-methylguanosine(46) in tRNA + S-adenosyl-L-homocysteine. The protein operates within tRNA modification; N(7)-methylguanine-tRNA biosynthesis. Catalyzes the formation of N(7)-methylguanine at position 46 (m7G46) in tRNA. The polypeptide is tRNA (guanine-N(7)-)-methyltransferase (Chloroflexus aurantiacus (strain ATCC 29366 / DSM 635 / J-10-fl)).